The following is a 611-amino-acid chain: Dihydroxy-acid dehydratase (611 aa).

Mg(2+) is bound at residue aspartate 81. Cysteine 122 provides a ligand contact to [2Fe-2S] cluster. Residues aspartate 123 and lysine 124 each coordinate Mg(2+). Lysine 124 is subject to N6-carboxylysine. Position 195 (cysteine 195) interacts with [2Fe-2S] cluster. Glutamate 491 contributes to the Mg(2+) binding site. Residue serine 517 is the Proton acceptor of the active site.

This sequence belongs to the IlvD/Edd family. Homodimer. [2Fe-2S] cluster serves as cofactor. The cofactor is Mg(2+).

The enzyme catalyses (2R)-2,3-dihydroxy-3-methylbutanoate = 3-methyl-2-oxobutanoate + H2O. It carries out the reaction (2R,3R)-2,3-dihydroxy-3-methylpentanoate = (S)-3-methyl-2-oxopentanoate + H2O. Its pathway is amino-acid biosynthesis; L-isoleucine biosynthesis; L-isoleucine from 2-oxobutanoate: step 3/4. It participates in amino-acid biosynthesis; L-valine biosynthesis; L-valine from pyruvate: step 3/4. Functions in the biosynthesis of branched-chain amino acids. Catalyzes the dehydration of (2R,3R)-2,3-dihydroxy-3-methylpentanoate (2,3-dihydroxy-3-methylvalerate) into 2-oxo-3-methylpentanoate (2-oxo-3-methylvalerate) and of (2R)-2,3-dihydroxy-3-methylbutanoate (2,3-dihydroxyisovalerate) into 2-oxo-3-methylbutanoate (2-oxoisovalerate), the penultimate precursor to L-isoleucine and L-valine, respectively. The chain is Dihydroxy-acid dehydratase from Brucella suis (strain ATCC 23445 / NCTC 10510).